We begin with the raw amino-acid sequence, 404 residues long: Arginine biosynthesis bifunctional protein ArgJ (404 aa).

Residues threonine 166, lysine 189, threonine 200, glutamate 280, asparagine 399, and serine 404 each contribute to the substrate site. Threonine 200 functions as the Nucleophile in the catalytic mechanism.

This sequence belongs to the ArgJ family. Heterotetramer of two alpha and two beta chains.

It localises to the cytoplasm. The catalysed reaction is N(2)-acetyl-L-ornithine + L-glutamate = N-acetyl-L-glutamate + L-ornithine. The enzyme catalyses L-glutamate + acetyl-CoA = N-acetyl-L-glutamate + CoA + H(+). It functions in the pathway amino-acid biosynthesis; L-arginine biosynthesis; L-ornithine and N-acetyl-L-glutamate from L-glutamate and N(2)-acetyl-L-ornithine (cyclic): step 1/1. The protein operates within amino-acid biosynthesis; L-arginine biosynthesis; N(2)-acetyl-L-ornithine from L-glutamate: step 1/4. Catalyzes two activities which are involved in the cyclic version of arginine biosynthesis: the synthesis of N-acetylglutamate from glutamate and acetyl-CoA as the acetyl donor, and of ornithine by transacetylation between N(2)-acetylornithine and glutamate. The chain is Arginine biosynthesis bifunctional protein ArgJ from Mycobacterium bovis (strain ATCC BAA-935 / AF2122/97).